The following is a 201-amino-acid chain: Holliday junction branch migration complex subunit RuvA (201 aa).

The interval 1-64 (MFNSISGILS…EDQMRLFGFP (64 aa)) is domain I. The interval 65–140 (NQAERSLFLD…KLTNLNEVSS (76 aa)) is domain II. Residues 140–144 (SKGQA) are flexible linker. The tract at residues 145 to 201 (SVSCEYEDIVTALTEMGFERKSVIVQVEKIAEEMKAAGSDPLKNEEELFRRSIVALS) is domain III.

Belongs to the RuvA family. As to quaternary structure, homotetramer. Forms an RuvA(8)-RuvB(12)-Holliday junction (HJ) complex. HJ DNA is sandwiched between 2 RuvA tetramers; dsDNA enters through RuvA and exits via RuvB. An RuvB hexamer assembles on each DNA strand where it exits the tetramer. Each RuvB hexamer is contacted by two RuvA subunits (via domain III) on 2 adjacent RuvB subunits; this complex drives branch migration. In the full resolvosome a probable DNA-RuvA(4)-RuvB(12)-RuvC(2) complex forms which resolves the HJ.

The protein localises to the cytoplasm. Functionally, the RuvA-RuvB-RuvC complex processes Holliday junction (HJ) DNA during genetic recombination and DNA repair, while the RuvA-RuvB complex plays an important role in the rescue of blocked DNA replication forks via replication fork reversal (RFR). RuvA specifically binds to HJ cruciform DNA, conferring on it an open structure. The RuvB hexamer acts as an ATP-dependent pump, pulling dsDNA into and through the RuvAB complex. HJ branch migration allows RuvC to scan DNA until it finds its consensus sequence, where it cleaves and resolves the cruciform DNA. This chain is Holliday junction branch migration complex subunit RuvA, found in Treponema denticola (strain ATCC 35405 / DSM 14222 / CIP 103919 / JCM 8153 / KCTC 15104).